We begin with the raw amino-acid sequence, 225 residues long: 7-cyano-7-deazaguanine synthase (225 aa).

An ATP-binding site is contributed by 10–20 (FSGGQDSTTLA). Zn(2+)-binding residues include C190, C205, C208, and C211.

The protein belongs to the QueC family. It depends on Zn(2+) as a cofactor.

It carries out the reaction 7-carboxy-7-deazaguanine + NH4(+) + ATP = 7-cyano-7-deazaguanine + ADP + phosphate + H2O + H(+). Its pathway is purine metabolism; 7-cyano-7-deazaguanine biosynthesis. Its function is as follows. Catalyzes the ATP-dependent conversion of 7-carboxy-7-deazaguanine (CDG) to 7-cyano-7-deazaguanine (preQ(0)). The polypeptide is 7-cyano-7-deazaguanine synthase (Helicobacter pylori (strain J99 / ATCC 700824) (Campylobacter pylori J99)).